Reading from the N-terminus, the 315-residue chain is Dihydroorotate dehydrogenase (fumarate) (315 aa).

Residues lysine 46, 70 to 74 (NSMGL), and asparagine 130 contribute to the substrate site. 46-47 (KS) lines the FMN pocket. An FMN-binding site is contributed by asparagine 130. Cysteine 133 functions as the Nucleophile in the catalytic mechanism. FMN-binding residues include lysine 167 and isoleucine 195. 196-197 (NS) is a binding site for substrate. Residues glycine 224, 252-253 (GG), and 274-275 (GT) each bind FMN.

The protein belongs to the dihydroorotate dehydrogenase family. Type 1 subfamily. As to quaternary structure, homodimer. It depends on FMN as a cofactor.

It is found in the cytoplasm. It carries out the reaction (S)-dihydroorotate + fumarate = orotate + succinate. It participates in pyrimidine metabolism; UMP biosynthesis via de novo pathway. Catalyzes the conversion of dihydroorotate to orotate with fumarate as the electron acceptor. The polypeptide is Dihydroorotate dehydrogenase (fumarate) (URA1) (Kluyveromyces lactis (strain ATCC 8585 / CBS 2359 / DSM 70799 / NBRC 1267 / NRRL Y-1140 / WM37) (Yeast)).